We begin with the raw amino-acid sequence, 611 residues long: DNA mismatch repair protein MutL (611 aa).

The protein belongs to the DNA mismatch repair MutL/HexB family.

Functionally, this protein is involved in the repair of mismatches in DNA. It is required for dam-dependent methyl-directed DNA mismatch repair. May act as a 'molecular matchmaker', a protein that promotes the formation of a stable complex between two or more DNA-binding proteins in an ATP-dependent manner without itself being part of a final effector complex. This is DNA mismatch repair protein MutL from Bartonella bacilliformis (strain ATCC 35685 / KC583 / Herrer 020/F12,63).